The sequence spans 116 residues: MRVKTGVVRRRRHKKVLKLARGFYSGRRKHFRKAKEQLERSMYYAFRDRKQKKREFRSLWVVRINAACRMHNTSYSRFMHALKVANIELDRKVLADMAMNDMQAFKSVLESVKEHL.

This sequence belongs to the bacterial ribosomal protein bL20 family.

Functionally, binds directly to 23S ribosomal RNA and is necessary for the in vitro assembly process of the 50S ribosomal subunit. It is not involved in the protein synthesizing functions of that subunit. This Helicobacter pylori (strain HPAG1) protein is Large ribosomal subunit protein bL20.